A 248-amino-acid polypeptide reads, in one-letter code: Triosephosphate isomerase (248 aa).

9 to 11 (NWK) serves as a coordination point for substrate. Histidine 94 functions as the Electrophile in the catalytic mechanism. Glutamate 166 functions as the Proton acceptor in the catalytic mechanism. Substrate contacts are provided by residues glycine 172, serine 211, and 232-233 (GG).

This sequence belongs to the triosephosphate isomerase family. As to quaternary structure, homodimer.

The protein localises to the cytoplasm. It carries out the reaction D-glyceraldehyde 3-phosphate = dihydroxyacetone phosphate. Its pathway is carbohydrate biosynthesis; gluconeogenesis. The protein operates within carbohydrate degradation; glycolysis; D-glyceraldehyde 3-phosphate from glycerone phosphate: step 1/1. Its function is as follows. Involved in the gluconeogenesis. Catalyzes stereospecifically the conversion of dihydroxyacetone phosphate (DHAP) to D-glyceraldehyde-3-phosphate (G3P). The protein is Triosephosphate isomerase of Ruthia magnifica subsp. Calyptogena magnifica.